Here is a 901-residue protein sequence, read N- to C-terminus: Cyanophycin synthetase (901 aa).

The region spanning 224-478 (KRILAASGVP…VAGAVMDMLF (255 aa)) is the ATP-grasp domain. Residue 493-499 (GTNGKTT) participates in ATP binding.

This sequence in the C-terminal section; belongs to the MurCDEF family. As to quaternary structure, homodimer.

It catalyses the reaction [L-4-(L-arginin-2-N-yl)aspartate](n) + L-aspartate + ATP = [L-4-(L-arginin-2-N-yl)aspartate](n)-L-aspartate + ADP + phosphate + H(+). The enzyme catalyses [L-4-(L-arginin-2-N-yl)aspartate](n)-L-aspartate + L-arginine + ATP = [L-4-(L-arginin-2-N-yl)aspartate](n+1) + ADP + phosphate + H(+). Functionally, catalyzes the ATP-dependent polymerization of arginine and aspartate to multi-L-arginyl-poly-L-aspartic acid (cyanophycin; a water-insoluble reserve polymer). The protein is Cyanophycin synthetase (cphA) of Nostoc sp. (strain PCC 7120 / SAG 25.82 / UTEX 2576).